Here is a 608-residue protein sequence, read N- to C-terminus: UvrABC system protein C (608 aa).

The GIY-YIG domain occupies 15-93; sequence HQPGVYRMYN…IKQYLPKYNV (79 aa). One can recognise a UVR domain in the interval 203-238; the sequence is RQVIQTLVKQMESASQSLNFEKAAIIRDQIQAMRRV.

This sequence belongs to the UvrC family. In terms of assembly, interacts with UvrB in an incision complex.

Its subcellular location is the cytoplasm. The UvrABC repair system catalyzes the recognition and processing of DNA lesions. UvrC both incises the 5' and 3' sides of the lesion. The N-terminal half is responsible for the 3' incision and the C-terminal half is responsible for the 5' incision. The polypeptide is UvrABC system protein C (Aliivibrio fischeri (strain ATCC 700601 / ES114) (Vibrio fischeri)).